A 478-amino-acid polypeptide reads, in one-letter code: MALAAPESSKNLGLSSLPTIAAIATPLGRGGVGVIRLSGTHAYSIACTLTGKSAFKPRMASFCRFYQADGTVIDEGLVLYFKGPHSFTGEDVIELQGHGGMILQNQLLARVFELGAKQASAGEFSYRAFDNDKLDLVQAEAIADAIDATSAAAASSAIRSLSGEFSQKINQLLEQLIHLRLHVEAAIDFPDEEDVDFLSDGVIQGKLEQTQEKIQQVLATAKQGQLLRDGIHVVLAGRPNAGKSSLLNRLAGQERAIVTDVAGTTRDTLQETVVLNGLTLHLTDTAGLRETEDTVERIGIERARTAIAQADMLLMVYDVTRDLEEESTPLQLAEQLFGELPEAKRLLIIANKSDLLNNNSSKEITSISQQEIHNRGYEQVNVSCETGAGIDDLVETLCAKVGFHPPENSLIARTRHLDALRRTAEYLAEAHEQLTVFKAGELVAESLRQAQHSLGEITGEFSADDLLGKIFGSFCIGK.

(6S)-5-formyl-5,6,7,8-tetrahydrofolate contacts are provided by Arg-36, Glu-94, and Lys-133. Residues 230–402 form the TrmE-type G domain; the sequence is GIHVVLAGRP…LVETLCAKVG (173 aa). A K(+)-binding site is contributed by Asn-240. Residues 240–245, 259–265, and 284–287 contribute to the GTP site; these read NAGKSS, TDVAGTT, and DTAG. Ser-244 contacts Mg(2+). Residues Thr-259, Val-261, and Thr-264 each coordinate K(+). Thr-265 serves as a coordination point for Mg(2+). Lys-478 contributes to the (6S)-5-formyl-5,6,7,8-tetrahydrofolate binding site.

Belongs to the TRAFAC class TrmE-Era-EngA-EngB-Septin-like GTPase superfamily. TrmE GTPase family. In terms of assembly, homodimer. Heterotetramer of two MnmE and two MnmG subunits. The cofactor is K(+).

It is found in the cytoplasm. Exhibits a very high intrinsic GTPase hydrolysis rate. Involved in the addition of a carboxymethylaminomethyl (cmnm) group at the wobble position (U34) of certain tRNAs, forming tRNA-cmnm(5)s(2)U34. The sequence is that of tRNA modification GTPase MnmE from Psychrobacter cryohalolentis (strain ATCC BAA-1226 / DSM 17306 / VKM B-2378 / K5).